Reading from the N-terminus, the 534-residue chain is UDP-glucuronosyltransferase 1A3 (534 aa).

An N-terminal signal peptide occupies residues 1–28; sequence MATGLQVPLPWLATGLLLLLSVQPWAES. 4 N-linked (GlcNAc...) asparagine glycosylation sites follow: Asn-119, Asn-142, Asn-296, and Asn-348. A helical transmembrane segment spans residues 492–508; the sequence is VIGFLLAVVLTVAFITF.

Belongs to the UDP-glycosyltransferase family. As to quaternary structure, homodimer. Homooligomer. Interacts with UGT1A1, UGT1A4, UGT1A6, UGT1A7, UGT1A8, UGT1A9 and UGT1A10 to form heterodimers. Isoform 1 interacts with isoform 2/i2 suggesting that oligomerization is involved in negative regulation of transferase activity by isoform 2. Isoform 1 also interacts with respective i2 isoforms of UGT1A1, UGT1A4, UGT1A6, UGT1A7, UGT1A8, UGT1A9 and UGT1A10. Expressed in liver, kidney, colon, esophagus and small intestine. As to expression, expressed in liver, kidney and colon. Not expressed in esophagus and small intestine.

It is found in the endoplasmic reticulum membrane. The enzyme catalyses glucuronate acceptor + UDP-alpha-D-glucuronate = acceptor beta-D-glucuronoside + UDP + H(+). It carries out the reaction 17beta-estradiol + UDP-alpha-D-glucuronate = 17beta-estradiol 3-O-(beta-D-glucuronate) + UDP + H(+). It catalyses the reaction 17beta-estradiol + UDP-alpha-D-glucuronate = 17beta-estradiol 17-O-(beta-D-glucuronate) + UDP + H(+). The catalysed reaction is 17alpha-estradiol + UDP-alpha-D-glucuronate = 17alpha-estradiol 3-O-(beta-D-glucuronate) + UDP + H(+). The enzyme catalyses estrone + UDP-alpha-D-glucuronate = estrone 3-O-(beta-D-glucuronate) + UDP + H(+). It carries out the reaction chenodeoxycholate + UDP-alpha-D-glucuronate = chenodeoxycholoyl-24-O-(beta-D-glucuronate) + UDP. It catalyses the reaction deoxycholate + UDP-alpha-D-glucuronate = deoxycholoyl-24-O-(beta-D-glucuronate) + UDP. The catalysed reaction is lithocholate + UDP-alpha-D-glucuronate = lithocholoyl-24-O-(beta-D-glucuronate) + UDP. The enzyme catalyses hyodeoxycholate + UDP-alpha-D-glucuronate = hyodeoxycholoyl-24-O-(beta-D-glucuronate) + UDP. It carries out the reaction hyocholate + UDP-alpha-D-glucuronate = hyocholoyl-24-O-(beta-D-glucuronate) + UDP. It catalyses the reaction calcidiol + UDP-alpha-D-glucuronate = calcidiol 25-O-(beta-D-glucuronide) + UDP + H(+). The catalysed reaction is (E)-ferulate + UDP-alpha-D-glucuronate = (E)-4-O-(beta-D-glucuronosyl)-ferulate + UDP + H(+). The enzyme catalyses (E)-ferulate + UDP-alpha-D-glucuronate = (E)-ferulic acid beta-D-glucuronate ester + UDP. It carries out the reaction losartan + UDP-alpha-D-glucuronate = losartan-2-N-beta-D-glucuronide + UDP. It catalyses the reaction candesartan + UDP-alpha-D-glucuronate = candesartan-2-N-beta-D-glucuronide + UDP. The catalysed reaction is zolasartan + UDP-alpha-D-glucuronate = zolarsartan-2-N-beta-D-glucuronide + UDP. Its function is as follows. UDP-glucuronosyltransferase (UGT) that catalyzes phase II biotransformation reactions in which lipophilic substrates are conjugated with glucuronic acid to increase the metabolite's water solubility, thereby facilitating excretion into either the urine or bile. Essential for the elimination and detoxification of drugs, xenobiotics and endogenous compounds. Catalyzes the glucuronidation of endogenous estrogen hormones such as estradiol and estrone. Contributes to bile acid (BA) detoxification by catalyzing the glucuronidation of BA substrates, which are natural detergents for dietary lipids absorption. Involved in the glucuronidation of calcidiol, which is the major circulating form of vitamin D3, essential for the regulation of calcium and phosphate homeostasis. Involved in the glucuronidation of the phytochemical ferulic acid at the phenolic or the carboxylic acid group. Involved in the glucuronidation of the AGTR1 angiotensin receptor antagonists losartan, candesartan and zolarsartan, which can inhibit the effect of angiotensin II. In terms of biological role, lacks UDP-glucuronosyltransferase (UGT) activity but acts as a negative regulator of isoform 1. This chain is UDP-glucuronosyltransferase 1A3, found in Homo sapiens (Human).